Here is a 255-residue protein sequence, read N- to C-terminus: MARRPLVMGNWKLNGSKAFTKELITGLKDELNAVSGCDVAIAPPVMYLAEAEAALVSSDIALGTQNVDLNKQGAFTGDISTEMLKDFGVKYVIIGHSERRQYHHESDEFIAKKFGVLKDAGLVPVLCIGESEAENEAGKTEEVCARQIDAVMNTLGVEAFNGAVIAYEPIWAIGTGKSATPAQAQAVHAFIRGHIAKQSQAVAERVIIQYGGSINDANAAELFTQPDIDGALVGGASLKASAFAVIVKAAAKAKN.

10 to 12 is a substrate binding site; the sequence is NWK. The active-site Electrophile is the His-96. Glu-168 (proton acceptor) is an active-site residue. Substrate is bound by residues Gly-174, Ser-213, and 234–235; that span reads GG.

The protein belongs to the triosephosphate isomerase family. In terms of assembly, homodimer.

Its subcellular location is the cytoplasm. The catalysed reaction is D-glyceraldehyde 3-phosphate = dihydroxyacetone phosphate. It participates in carbohydrate biosynthesis; gluconeogenesis. Its pathway is carbohydrate degradation; glycolysis; D-glyceraldehyde 3-phosphate from glycerone phosphate: step 1/1. Involved in the gluconeogenesis. Catalyzes stereospecifically the conversion of dihydroxyacetone phosphate (DHAP) to D-glyceraldehyde-3-phosphate (G3P). This is Triosephosphate isomerase from Histophilus somni (strain 2336) (Haemophilus somnus).